Reading from the N-terminus, the 200-residue chain is Lipopolysaccharide core heptose(II)-phosphate phosphatase (200 aa).

A signal peptide spans 1–25 (MLAFCRSSLKSKKYFIILLALAAIA).

Belongs to the phosphoglycerate mutase family. Ais subfamily.

It localises to the periplasm. Its pathway is bacterial outer membrane biogenesis; lipopolysaccharide metabolism. Catalyzes the dephosphorylation of heptose(II) of the outer membrane lipopolysaccharide core. The sequence is that of Lipopolysaccharide core heptose(II)-phosphate phosphatase from Escherichia coli O9:H4 (strain HS).